A 331-amino-acid polypeptide reads, in one-letter code: Anthranilate phosphoribosyltransferase (331 aa).

5-phospho-alpha-D-ribose 1-diphosphate is bound by residues Gly81, Gly84–Asp85, Ser89, Asn91–Thr94, Lys109–Ser117, and Ser121. Gly81 contributes to the anthranilate binding site. Ser93 serves as a coordination point for Mg(2+). Asn112 contacts anthranilate. Arg167 contributes to the anthranilate binding site. Residues Asp226 and Glu227 each contribute to the Mg(2+) site.

Belongs to the anthranilate phosphoribosyltransferase family. In terms of assembly, homodimer. Mg(2+) serves as cofactor.

It catalyses the reaction N-(5-phospho-beta-D-ribosyl)anthranilate + diphosphate = 5-phospho-alpha-D-ribose 1-diphosphate + anthranilate. The protein operates within amino-acid biosynthesis; L-tryptophan biosynthesis; L-tryptophan from chorismate: step 2/5. Functionally, catalyzes the transfer of the phosphoribosyl group of 5-phosphorylribose-1-pyrophosphate (PRPP) to anthranilate to yield N-(5'-phosphoribosyl)-anthranilate (PRA). The sequence is that of Anthranilate phosphoribosyltransferase from Oleidesulfovibrio alaskensis (strain ATCC BAA-1058 / DSM 17464 / G20) (Desulfovibrio alaskensis).